We begin with the raw amino-acid sequence, 43 residues long: CNGRDVPCDPDPAKNRRCCSGLECLKPYLHGTWYQDYCYYVEK.

Cystine bridges form between Cys-1–Cys-19, Cys-8–Cys-24, and Cys-18–Cys-38.

The protein belongs to the neurotoxin 14 (magi-1) family. 02 (HWTX-XVIc) subfamily. As to expression, expressed by the venom gland.

It localises to the secreted. Its function is as follows. Probable ion channel inhibitor. The polypeptide is Hainantoxin F5-22.36 (Cyriopagopus hainanus (Chinese bird spider)).